Consider the following 179-residue polypeptide: Interleukin-10 (179 aa).

Positions 1–19 (MPSSSALLCCLVFLAGVAA) are cleaved as a signal peptide. Cystine bridges form between Cys-31–Cys-127 and Cys-81–Cys-133. The N-linked (GlcNAc...) asparagine glycan is linked to Asn-135.

This sequence belongs to the IL-10 family. In terms of assembly, homodimer. Interacts with IL10RA and IL10RB.

It localises to the secreted. Its function is as follows. Major immune regulatory cytokine that acts on many cells of the immune system where it has profound anti-inflammatory functions, limiting excessive tissue disruption caused by inflammation. Mechanistically, IL10 binds to its heterotetrameric receptor comprising IL10RA and IL10RB leading to JAK1 and STAT2-mediated phosphorylation of STAT3. In turn, STAT3 translocates to the nucleus where it drives expression of anti-inflammatory mediators. Targets antigen-presenting cells (APCs) such as macrophages and monocytes and inhibits their release of pro-inflammatory cytokines including granulocyte-macrophage colony-stimulating factor /GM-CSF, granulocyte colony-stimulating factor/G-CSF, IL-1 alpha, IL-1 beta, IL-6, IL-8 and TNF-alpha. Also interferes with antigen presentation by reducing the expression of MHC-class II and co-stimulatory molecules, thereby inhibiting their ability to induce T cell activation. In addition, controls the inflammatory response of macrophages by reprogramming essential metabolic pathways including mTOR signaling. In Bubalus carabanensis (Swamp type water buffalo), this protein is Interleukin-10 (IL10).